A 275-amino-acid chain; its full sequence is Diaminopimelate epimerase (275 aa).

Positions 12, 45, and 65 each coordinate substrate. C74 (proton donor) is an active-site residue. Residues 75–76 (GN), N158, N191, and 209–210 (ER) each bind substrate. Catalysis depends on C218, which acts as the Proton acceptor. Residue 219 to 220 (GT) participates in substrate binding.

Belongs to the diaminopimelate epimerase family. Homodimer.

The protein localises to the cytoplasm. The enzyme catalyses (2S,6S)-2,6-diaminopimelate = meso-2,6-diaminopimelate. Its pathway is amino-acid biosynthesis; L-lysine biosynthesis via DAP pathway; DL-2,6-diaminopimelate from LL-2,6-diaminopimelate: step 1/1. Its function is as follows. Catalyzes the stereoinversion of LL-2,6-diaminopimelate (L,L-DAP) to meso-diaminopimelate (meso-DAP), a precursor of L-lysine and an essential component of the bacterial peptidoglycan. The chain is Diaminopimelate epimerase from Shewanella denitrificans (strain OS217 / ATCC BAA-1090 / DSM 15013).